The sequence spans 342 residues: Uroporphyrinogen decarboxylase (342 aa).

Residues 24–28 (RQAGR), Asp-74, Tyr-151, Ser-206, and His-322 each bind substrate.

It belongs to the uroporphyrinogen decarboxylase family. In terms of assembly, homodimer.

Its subcellular location is the cytoplasm. The enzyme catalyses uroporphyrinogen III + 4 H(+) = coproporphyrinogen III + 4 CO2. It participates in porphyrin-containing compound metabolism; protoporphyrin-IX biosynthesis; coproporphyrinogen-III from 5-aminolevulinate: step 4/4. Functionally, catalyzes the decarboxylation of four acetate groups of uroporphyrinogen-III to yield coproporphyrinogen-III. This is Uroporphyrinogen decarboxylase from Paracoccus denitrificans (strain Pd 1222).